The following is a 245-amino-acid chain: Large ribosomal subunit protein uL29m (245 aa).

2 stretches are compositionally biased toward low complexity: residues 36–49 (SFNSQRSQFSTSSS) and 234–245 (STKSETTTSKNI). Disordered regions lie at residues 36-98 (SFNS…NPDH) and 207-245 (RPSPDEVLEEETETAMPTEVMPEELDSSTKSETTTSKNI).

The protein belongs to the universal ribosomal protein uL29 family. In terms of assembly, component of the mitochondrial large ribosomal subunit. Mature mitochondrial ribosomes consist of a small (37S) and a large (54S) subunit. The 37S subunit contains at least 33 different proteins and 1 molecule of RNA (15S). The 54S subunit contains at least 45 different proteins and 1 molecule of RNA (21S).

The protein resides in the mitochondrion. The sequence is that of Large ribosomal subunit protein uL29m (MRPL4) from Coccidioides immitis (strain RS) (Valley fever fungus).